The chain runs to 442 residues: Kelch domain-containing protein 10 (442 aa).

The interval 1 to 58 is disordered; that stretch reads MSAAQGWDRNRRRGGGAAGGGGGGSGAGGGSGGNGGRGTGQLNRFVQLSGRPHLPGKK. Arg13 is modified (omega-N-methylarginine). The span at 15–39 shows a compositional bias: gly residues; the sequence is GGAAGGGGGGSGAGGGSGGNGGRGT. Kelch repeat units follow at residues 87 to 154, 155 to 198, 199 to 260, 261 to 319, 320 to 364, and 365 to 403; these read RPPP…PREL, ASMS…ALLS, CRGK…PEER, YRHE…RRCH, SCVQ…PEPV, and YFHC…LVVP. Residues 401–442 form an interaction with CUL2 region; that stretch reads VVPSLLELAWEKLLAAFPNLANLSRTQLLHLGLTQGLIERLK.

It belongs to the KLHDC10 family. In terms of assembly, component of a CRL2 E3 ubiquitin-protein ligase complex, also named ECS (Elongin BC-CUL2/5-SOCS-box protein) complex, composed of CUL2, Elongin BC (ELOB and ELOC), RBX1 and substrate-specific adapter KLHDC10. Interacts (via the 6 Kelch repeats) with PPP5C.

It localises to the nucleus. Its subcellular location is the cytoplasm. It functions in the pathway protein modification; protein ubiquitination. Substrate-recognition component of a Cul2-RING (CRL2) E3 ubiquitin-protein ligase complex of the DesCEND (destruction via C-end degrons) pathway, which recognizes a C-degron located at the extreme C-terminus of target proteins, leading to their ubiquitination and degradation. The C-degron recognized by the DesCEND pathway is usually a motif of less than ten residues and can be present in full-length proteins, truncated proteins or proteolytically cleaved forms. The CRL2(KLHDC10) complex specifically recognizes proteins with a proline-glycine (Pro-Gly) or an alanine tail (CAT tail) at the C-terminus, leading to their ubiquitination and degradation. The CRL2(KLHDC10) complex is involved in the ribosome-associated quality control (RQC) pathway, which mediates the extraction of incompletely synthesized nascent chains from stalled ribosomes: CRL2(KLHDC10) acts downstream of NEMF and recognizes CAT tails associated with stalled nascent chains, leading to their ubiquitination and degradation. Participates in the oxidative stress-induced cell death through MAP3K5 activation. Inhibits PPP5C phosphatase activity on MAP3K5. Acts as a regulator of necroptosis. This is Kelch domain-containing protein 10 (KLHDC10) from Bos taurus (Bovine).